The following is a 169-amino-acid chain: Inorganic pyrophosphatase (169 aa).

Residues Lys-20, Arg-34, and Tyr-46 each contribute to the substrate site. The Mg(2+) site is built by Asp-56, Asp-61, and Asp-93. Tyr-130 serves as a coordination point for substrate.

This sequence belongs to the PPase family. Homohexamer. Mg(2+) is required as a cofactor.

The protein resides in the cytoplasm. It catalyses the reaction diphosphate + H2O = 2 phosphate + H(+). Catalyzes the hydrolysis of inorganic pyrophosphate (PPi) forming two phosphate ions. This chain is Inorganic pyrophosphatase, found in Methanosarcina mazei (strain ATCC BAA-159 / DSM 3647 / Goe1 / Go1 / JCM 11833 / OCM 88) (Methanosarcina frisia).